A 376-amino-acid chain; its full sequence is Tetraacyldisaccharide 4'-kinase (376 aa).

51-58 (AVGGTGKT) serves as a coordination point for ATP.

This sequence belongs to the LpxK family.

The enzyme catalyses a lipid A disaccharide + ATP = a lipid IVA + ADP + H(+). Its pathway is glycolipid biosynthesis; lipid IV(A) biosynthesis; lipid IV(A) from (3R)-3-hydroxytetradecanoyl-[acyl-carrier-protein] and UDP-N-acetyl-alpha-D-glucosamine: step 6/6. Functionally, transfers the gamma-phosphate of ATP to the 4'-position of a tetraacyldisaccharide 1-phosphate intermediate (termed DS-1-P) to form tetraacyldisaccharide 1,4'-bis-phosphate (lipid IVA). This is Tetraacyldisaccharide 4'-kinase from Bacteroides fragilis (strain ATCC 25285 / DSM 2151 / CCUG 4856 / JCM 11019 / LMG 10263 / NCTC 9343 / Onslow / VPI 2553 / EN-2).